The primary structure comprises 275 residues: Small ribosomal subunit protein uS3 (275 aa).

Residues 38-106 (IRRLLSSGLE…QVQLNILEVK (69 aa)) form the KH type-2 domain. Residues 217–275 (AVPAGADRPRRERPAGSRPRRSGASGTTATGTEAGRAVGSEEPAAAESATTPEAQSTES) form a disordered region. Residues 238-275 (SGASGTTATGTEAGRAVGSEEPAAAESATTPEAQSTES) are compositionally biased toward low complexity.

This sequence belongs to the universal ribosomal protein uS3 family. Part of the 30S ribosomal subunit. Forms a tight complex with proteins S10 and S14.

Its function is as follows. Binds the lower part of the 30S subunit head. Binds mRNA in the 70S ribosome, positioning it for translation. This chain is Small ribosomal subunit protein uS3, found in Mycobacterium marinum (strain ATCC BAA-535 / M).